A 132-amino-acid polypeptide reads, in one-letter code: MPRRATRRFLPRKTKHRILKGVIYVRASFRNTIVTVTDTRGQAVSWSSAGACGFKGTKRRSPFAAQTAAANVVDTLVNQGLLKEAEVMISGPGPGRDTALRAIAQSGIQLSYVRDVTPMPHNGCRPPKRRRV.

The protein belongs to the universal ribosomal protein uS11 family. As to quaternary structure, part of the 30S ribosomal subunit.

The protein localises to the plastid. Its subcellular location is the chloroplast. The sequence is that of Small ribosomal subunit protein uS11c from Cryptomeria japonica (Japanese cedar).